We begin with the raw amino-acid sequence, 1048 residues long: Dyslexia-associated protein KIAA0319-like protein (1048 aa).

The Cytoplasmic segment spans residues 1–29 (MEKRLGVKPSPASWVLPGYCWQTSVKLPR). Residues 30-50 (SLYLLYSFFCFSVLWLSTDAD) traverse the membrane as a helical segment. One can recognise an MANSC domain in the interval 49–127 (ADESRCQQGK…PFRTDSSNSM (79 aa)). Residues 51–928 (ESRCQQGKTL…RDGDSNCEWS (878 aa)) lie on the Extracellular side of the membrane. 2 disordered regions span residues 198 to 218 (HGAM…LSPT) and 231 to 300 (SFTS…STSA). Polar residues predominate over residues 231–241 (SFTSNHTTQTP). N246 carries an N-linked (GlcNAc...) asparagine glycan. Low complexity-rich tracts occupy residues 247 to 261 (VSIH…SPVS) and 287 to 300 (ATPT…STSA). PKD domains follow at residues 309 to 400 (VVSA…VKPE), 408 to 497 (VAVV…VNKA), 503 to 593 (VANA…VQPE), 599 to 687 (QADA…VKEE), and 693 to 784 (VAKI…VKPD). N-linked (GlcNAc...) asparagine glycosylation occurs at N394. Positions 593–623 (ENNKPPQADAGPDKELTLPVDSTTLDGSKST) are disordered. The helical transmembrane segment at 929–949 (VLYVIIASFVIVVALGILSWT) threads the bilayer. Over 950 to 1048 (TICCCKRQKG…KSRSAREEIL (99 aa)) the chain is Cytoplasmic. T973 carries the post-translational modification Phosphothreonine. Position 977 is a phosphoserine (S977). The disordered stretch occupies residues 980–1007 (LKPTSRAGSKQKGPTLSSSLMHSESELD). Positions 985–994 (RAGSKQKGPT) are enriched in polar residues. Residues S1008 and S1030 each carry the phosphoserine modification. Residues 1024 to 1048 (LYGQNGSVPNGQTPLKSRSAREEIL) form a disordered region. The span at 1027–1039 (QNGSVPNGQTPLK) shows a compositional bias: polar residues. T1036 bears the Phosphothreonine mark.

As to quaternary structure, interacts with RTN4R. Post-translationally, N-glycosylated.

It localises to the cytoplasmic granule membrane. Its subcellular location is the golgi apparatus membrane. The protein localises to the golgi apparatus. The protein resides in the trans-Golgi network membrane. It is found in the cell membrane. Its function is as follows. Possible role in axon guidance through interaction with RTN4R. In terms of biological role, (Microbial infection) Acts as a receptor for adeno-associated virus and is involved in adeno-associated virus infection through endocytosis system. The polypeptide is Dyslexia-associated protein KIAA0319-like protein (Mus musculus (Mouse)).